The chain runs to 334 residues: MAGIASTVAVMGAGAWGTALAKVLADAGGEVTLWARRAEVADQINTTRYNPDYLPGALLPPSIHATADAEEALGGASTVLLGVPAQTMRANLERWAPLLPEGATLVSLAKGIELGTLMRMSQVIISVTGAEPAQVAVISGPNLASEIAECQPAATVVACSDSGRAVALQRALNSGYFRPYTNADVVGTEIGGACKNIIALACGMAVGIGLGENTAAAIITRGLAEIIRLGTALGANGATLAGLAGVGDLVATCTSPRSRNRSFGERLGRGETLQSAGKACHVVEGVTSCESVLALASSYDVEMPLTDAVHRVCHKGLSVDEAITLLLGRRTKPE.

Residues tryptophan 16, arginine 36, arginine 37, and lysine 110 each contribute to the NADPH site. 2 residues coordinate sn-glycerol 3-phosphate: lysine 110 and glycine 140. Alanine 144 lines the NADPH pocket. Sn-glycerol 3-phosphate-binding residues include lysine 195, aspartate 248, serine 258, arginine 259, and asparagine 260. Catalysis depends on lysine 195, which acts as the Proton acceptor. Arginine 259 is a binding site for NADPH. NADPH is bound by residues valine 282 and glutamate 284.

The protein belongs to the NAD-dependent glycerol-3-phosphate dehydrogenase family.

It is found in the cytoplasm. The enzyme catalyses sn-glycerol 3-phosphate + NAD(+) = dihydroxyacetone phosphate + NADH + H(+). It carries out the reaction sn-glycerol 3-phosphate + NADP(+) = dihydroxyacetone phosphate + NADPH + H(+). The protein operates within membrane lipid metabolism; glycerophospholipid metabolism. Its function is as follows. Catalyzes the reduction of the glycolytic intermediate dihydroxyacetone phosphate (DHAP) to sn-glycerol 3-phosphate (G3P), the key precursor for phospholipid synthesis. This is Glycerol-3-phosphate dehydrogenase [NAD(P)+] 2 from Mycobacterium bovis (strain ATCC BAA-935 / AF2122/97).